Consider the following 213-residue polypeptide: Uracil phosphoribosyltransferase (213 aa).

5-phospho-alpha-D-ribose 1-diphosphate is bound by residues Arg-78, Arg-103, and 130-138 (DPMLATGGS). Uracil contacts are provided by residues Ile-193 and 198–200 (GDA). 5-phospho-alpha-D-ribose 1-diphosphate is bound at residue Asp-199.

This sequence belongs to the UPRTase family. It depends on Mg(2+) as a cofactor.

It catalyses the reaction UMP + diphosphate = 5-phospho-alpha-D-ribose 1-diphosphate + uracil. It participates in pyrimidine metabolism; UMP biosynthesis via salvage pathway; UMP from uracil: step 1/1. Its activity is regulated as follows. Allosterically activated by GTP. Its function is as follows. Catalyzes the conversion of uracil and 5-phospho-alpha-D-ribose 1-diphosphate (PRPP) to UMP and diphosphate. This chain is Uracil phosphoribosyltransferase, found in Bordetella pertussis (strain Tohama I / ATCC BAA-589 / NCTC 13251).